Consider the following 130-residue polypeptide: Small ribosomal subunit protein uS9 (130 aa).

The protein belongs to the universal ribosomal protein uS9 family.

This chain is Small ribosomal subunit protein uS9, found in Pseudomonas fluorescens (strain Pf0-1).